A 551-amino-acid polypeptide reads, in one-letter code: L-lactate permease (551 aa).

12 consecutive transmembrane segments (helical) span residues 13-33, 37-57, 69-89, 131-151, 159-179, 194-214, 245-265, 306-326, 366-386, 405-425, 438-458, and 530-550; these read NIWL…FALI, LKGY…ALLF, VVYG…AAVF, GAAG…GLGF, LCLI…PILV, MVGR…MAIM, IGPE…LTLF, FLFL…ALFA, FDWF…SIVW, LALP…SNYS, TGSA…FLTG, and IFTC…TWMI.

This sequence belongs to the lactate permease family.

The protein localises to the cell inner membrane. The enzyme catalyses (S)-lactate(in) + H(+)(in) = (S)-lactate(out) + H(+)(out). It carries out the reaction (R)-lactate(in) + H(+)(in) = (R)-lactate(out) + H(+)(out). The catalysed reaction is glycolate(in) + H(+)(in) = glycolate(out) + H(+)(out). Functionally, uptake of L-lactate across the membrane. Can also transport D-lactate and glycolate. Seems to be driven by a proton motive force. In Salmonella typhi, this protein is L-lactate permease (lldP).